The chain runs to 256 residues: 5-keto-4-deoxy-D-glucarate aldolase (256 aa).

The Proton acceptor role is filled by histidine 50. Residue glutamine 151 participates in substrate binding. Mg(2+) is bound at residue glutamate 153. Substrate is bound by residues serine 178 and aspartate 179. Aspartate 179 lines the Mg(2+) pocket.

This sequence belongs to the HpcH/HpaI aldolase family. KDGluc aldolase subfamily. As to quaternary structure, homohexamer; trimer of dimers. Mg(2+) serves as cofactor.

The catalysed reaction is 5-dehydro-4-deoxy-D-glucarate = 2-hydroxy-3-oxopropanoate + pyruvate. It carries out the reaction 2-dehydro-3-deoxy-D-glucarate = 2-hydroxy-3-oxopropanoate + pyruvate. The protein operates within carbohydrate acid metabolism; galactarate degradation; D-glycerate from galactarate: step 2/3. Functionally, catalyzes the reversible retro-aldol cleavage of both 5-keto-4-deoxy-D-glucarate and 2-keto-3-deoxy-D-glucarate to pyruvate and tartronic semialdehyde. The chain is 5-keto-4-deoxy-D-glucarate aldolase from Salmonella gallinarum (strain 287/91 / NCTC 13346).